The chain runs to 931 residues: Beta-mannosidase A (931 aa).

The N-terminal stretch at 1–21 is a signal peptide; sequence MRHSIGLAAALLAPTLPVALG. N-linked (GlcNAc...) asparagine glycosylation is found at asparagine 40, asparagine 79, asparagine 247, asparagine 282, asparagine 316, asparagine 326, and asparagine 347. Glutamate 479 functions as the Proton donor in the catalytic mechanism. N-linked (GlcNAc...) asparagine glycosylation is found at asparagine 550, asparagine 608, asparagine 658, asparagine 738, asparagine 790, asparagine 798, asparagine 830, and asparagine 918.

Belongs to the glycosyl hydrolase 2 family. Beta-mannosidase A subfamily. Homodimer.

The protein localises to the secreted. The enzyme catalyses Hydrolysis of terminal, non-reducing beta-D-mannose residues in beta-D-mannosides.. The protein operates within glycan metabolism; N-glycan degradation. Functionally, exoglycosidase that cleaves the single beta-linked mannose residue from the non-reducing end of beta-mannosidic oligosaccharides of various complexity and length. Involved in the degradation of polymeric mannan and galactomannan. This Aspergillus niger (strain ATCC MYA-4892 / CBS 513.88 / FGSC A1513) protein is Beta-mannosidase A (mndA).